A 282-amino-acid polypeptide reads, in one-letter code: Protein MGF 505-3R (282 aa).

Belongs to the asfivirus MGF 505 family.

In terms of biological role, plays a role in virus cell tropism, and may be required for efficient virus replication in macrophages. This chain is Protein MGF 505-3R, found in Ornithodoros (relapsing fever ticks).